The chain runs to 124 residues: Biogenesis of lysosome-related organelles complex 1 subunit CNL1 (124 aa).

The segment at 1 to 20 (MMSENITAVEPQENNDVEAD) is disordered. Residues 75 to 98 (IGMAKDLLQKCDDLEKHYDQLDAV) adopt a coiled-coil conformation.

This sequence belongs to the BLOC1S4 family. Component of the biogenesis of lysosome-related organelles complex-1 (BLOC-1).

It is found in the cytoplasm. Component of the biogenesis of lysosome-related organelles complex-1 (BLOC-1), a complex that is involved in endosomal cargo sorting. The protein is Biogenesis of lysosome-related organelles complex 1 subunit CNL1 (CLN1) of Kluyveromyces lactis (strain ATCC 8585 / CBS 2359 / DSM 70799 / NBRC 1267 / NRRL Y-1140 / WM37) (Yeast).